The primary structure comprises 263 residues: Acyl-[acyl-carrier-protein]--UDP-N-acetylglucosamine O-acyltransferase (263 aa).

It belongs to the transferase hexapeptide repeat family. LpxA subfamily. In terms of assembly, homotrimer.

It localises to the cytoplasm. It catalyses the reaction a (3R)-hydroxyacyl-[ACP] + UDP-N-acetyl-alpha-D-glucosamine = a UDP-3-O-[(3R)-3-hydroxyacyl]-N-acetyl-alpha-D-glucosamine + holo-[ACP]. The protein operates within glycolipid biosynthesis; lipid IV(A) biosynthesis; lipid IV(A) from (3R)-3-hydroxytetradecanoyl-[acyl-carrier-protein] and UDP-N-acetyl-alpha-D-glucosamine: step 1/6. Its function is as follows. Involved in the biosynthesis of lipid A, a phosphorylated glycolipid that anchors the lipopolysaccharide to the outer membrane of the cell. The sequence is that of Acyl-[acyl-carrier-protein]--UDP-N-acetylglucosamine O-acyltransferase from Xylella fastidiosa (strain Temecula1 / ATCC 700964).